Reading from the N-terminus, the 475-residue chain is Methyltransferase-like protein 25B (475 aa).

The stretch at 185–210 (NKRLVARAQRLDQELLQALDKMEKRH) forms a coiled coil. Residues 406–426 (VVAFFSLALLLAPLVETLILL) form a helical membrane-spanning segment.

This sequence belongs to the METTL25 family.

It is found in the membrane. The polypeptide is Methyltransferase-like protein 25B (Rattus norvegicus (Rat)).